We begin with the raw amino-acid sequence, 242 residues long: Mannose-P-dolichol utilization defect 1 protein homolog (242 aa).

The 59-residue stretch at 37-95 folds into the PQ-loop 1 domain; that stretch reads LSRGLGFAITLGSILLFVPQILKIQAARSAQGISAASQLLALVGAIGTASYSYRSGFVF. A run of 7 helical transmembrane segments spans residues 40 to 60, 68 to 88, 98 to 118, 120 to 140, 148 to 168, 180 to 200, and 207 to 227; these read GLGF…ILKI, GISA…ASYS, WGDS…IFLF, GQTM…YGVV, TLTA…LLQI, LSLI…FTSV, and LLIV…AQFF. In terms of domain architecture, PQ-loop 2 spans 152–202; the sequence is VQTAGIPIVVVSKLLQISQNYRAQSTGQLSLISVFLQFAGTLARVFTSVQD.

This sequence belongs to the MPDU1 (TC 2.A.43.3) family.

It is found in the membrane. The polypeptide is Mannose-P-dolichol utilization defect 1 protein homolog (Caenorhabditis elegans).